The primary structure comprises 466 residues: 23S rRNA (uracil(1939)-C(5))-methyltransferase RlmD (466 aa).

Residues M1–E54 enclose the TRAM domain. The [4Fe-4S] cluster site is built by C67, C73, C76, and C155. 6 residues coordinate S-adenosyl-L-methionine: Q264, F293, N298, E314, N342, and D363. C393 (nucleophile) is an active-site residue.

It belongs to the class I-like SAM-binding methyltransferase superfamily. RNA M5U methyltransferase family. RlmD subfamily.

The enzyme catalyses uridine(1939) in 23S rRNA + S-adenosyl-L-methionine = 5-methyluridine(1939) in 23S rRNA + S-adenosyl-L-homocysteine + H(+). Functionally, catalyzes the formation of 5-methyl-uridine at position 1939 (m5U1939) in 23S rRNA. The chain is 23S rRNA (uracil(1939)-C(5))-methyltransferase RlmD from Bordetella parapertussis (strain 12822 / ATCC BAA-587 / NCTC 13253).